A 210-amino-acid polypeptide reads, in one-letter code: Cell division protein FtsQ (210 aa).

One can recognise a POTRA domain in the interval 1 to 58; it reads LQTSEIEVFQLLGLDGSTSLIALDIDAARRKLVQLPWVEDVDIRKVYPKTVEVRLKER. A helical transmembrane segment spans residues 8–25; it reads VFQLLGLDGSTSLIALDI.

Belongs to the FtsQ/DivIB family. FtsQ subfamily.

The protein localises to the cell inner membrane. Essential cell division protein. In Rhizobium radiobacter (Agrobacterium tumefaciens), this protein is Cell division protein FtsQ.